Reading from the N-terminus, the 147-residue chain is Hemoglobin subunit beta (147 aa).

The region spanning 3–147 (HWTAEEKQLI…VAHALARKYH (145 aa)) is the Globin domain. The heme b site is built by His64 and His93.

It belongs to the globin family. Heterotetramer of two alpha chains and two beta chains. Red blood cells.

In terms of biological role, involved in oxygen transport from the lung to the various peripheral tissues. The sequence is that of Hemoglobin subunit beta (HBB) from Cairina moschata (Muscovy duck).